The sequence spans 129 residues: Flagellar assembly factor FliW (129 aa).

The protein belongs to the FliW family. In terms of assembly, interacts with flagellins FlaA and FlaB but not with FlaC; recognizes glycosylated and non-glycosylated FlaA equally. Interacts with CsrA. May form a 3-way complex of flagellin, FliS and FliW simultaneously in which FliS and FliW do not directly interact.

The protein localises to the cytoplasm. Its function is as follows. Acts as an anti-CsrA protein, binds CsrA and prevents it from repressing translation of its target genes, one of which is flagellin. Binds to flagellin and participates in the assembly of the flagellum. Overexpression leads to increased levels of FlaA and FlaB, but levels of FlaC remain stable. Involved in post-transcriptional regulation of flagellin biosynthesis. In Campylobacter jejuni subsp. jejuni serotype O:6 (strain 81116 / NCTC 11828), this protein is Flagellar assembly factor FliW.